The sequence spans 264 residues: Thymidylate synthase (264 aa).

Arg-21 lines the dUMP pocket. Residue His-51 participates in (6R)-5,10-methylene-5,6,7,8-tetrahydrofolate binding. 126 to 127 (RR) lines the dUMP pocket. Cys-146 serves as the catalytic Nucleophile. Residues 166–169 (RSCD), Asn-177, and 207–209 (HLY) contribute to the dUMP site. Asp-169 is a binding site for (6R)-5,10-methylene-5,6,7,8-tetrahydrofolate. Ala-263 is a binding site for (6R)-5,10-methylene-5,6,7,8-tetrahydrofolate.

It belongs to the thymidylate synthase family. Bacterial-type ThyA subfamily. As to quaternary structure, homodimer.

It localises to the cytoplasm. The enzyme catalyses dUMP + (6R)-5,10-methylene-5,6,7,8-tetrahydrofolate = 7,8-dihydrofolate + dTMP. The protein operates within pyrimidine metabolism; dTTP biosynthesis. Catalyzes the reductive methylation of 2'-deoxyuridine-5'-monophosphate (dUMP) to 2'-deoxythymidine-5'-monophosphate (dTMP) while utilizing 5,10-methylenetetrahydrofolate (mTHF) as the methyl donor and reductant in the reaction, yielding dihydrofolate (DHF) as a by-product. This enzymatic reaction provides an intracellular de novo source of dTMP, an essential precursor for DNA biosynthesis. The protein is Thymidylate synthase of Salmonella typhimurium (strain LT2 / SGSC1412 / ATCC 700720).